A 71-amino-acid polypeptide reads, in one-letter code: Heat-stable enterotoxin II (71 aa).

A signal peptide spans 1-23; that stretch reads MKKNIAFLLASMFVFSIATNAYA. 2 disulfides stabilise this stretch: Cys-33/Cys-71 and Cys-44/Cys-59.

It localises to the secreted. Its function is as follows. Toxin which activates the particulate form of guanylate cyclase and increases cyclic GMP levels within the host intestinal epithelial cells. This chain is Heat-stable enterotoxin II (stiI), found in Escherichia coli.